The primary structure comprises 283 residues: Extracellular metalloprotease MGG_08041 (283 aa).

The signal sequence occupies residues 1–22 (MQINVVKTFLFALAASSVSALA). N-linked (GlcNAc...) asparagine glycosylation occurs at Asn55. His197 lines the Zn(2+) pocket. The active site involves Glu198. His201 serves as a coordination point for Zn(2+). A disulfide bond links Cys233 and Cys260.

Belongs to the peptidase M43B family.

It is found in the secreted. In terms of biological role, secreted metalloproteinase that allows assimilation of proteinaceous substrates. This Pyricularia oryzae (strain 70-15 / ATCC MYA-4617 / FGSC 8958) (Rice blast fungus) protein is Extracellular metalloprotease MGG_08041.